The primary structure comprises 592 residues: Potassium-transporting ATPase potassium-binding subunit (592 aa).

13 consecutive transmembrane segments (helical) span residues 6 to 26 (WLETILFFVVLLALIKPFGTY), 67 to 87 (ACAMLLFNLVFAVSLFAMLLL), 136 to 156 (GFAVHNFTSAATGIVIAIAAI), 179 to 199 (LYILLPLSLIAAIFLVSQGVI), 283 to 303 (LSNIFEVFLILLISGGLTYTF), 312 to 332 (QGWALLAVMLAILILAIGVFY), 359 to 379 (FGLAGSALFATATTGTSCGAV), 389 to 409 (IGGMVPLSLILLSEVIFGGVG), 411 to 431 (GLYTMLAFVVIAVFVAGLMIG), 450 to 470 (ITTVLASGILVLIFSGIAMIL), 489 to 511 (LYAFASMSNNNGSAFAGLNGNTL), 519 to 539 (VAMLLGRFVPAVAVLAMAGGL), and 559 to 579 (FALWLTLVILIVGALTFFPAL).

Belongs to the KdpA family. In terms of assembly, the system is composed of three essential subunits: KdpA, KdpB and KdpC.

It is found in the cell inner membrane. Part of the high-affinity ATP-driven potassium transport (or Kdp) system, which catalyzes the hydrolysis of ATP coupled with the electrogenic transport of potassium into the cytoplasm. This subunit binds the periplasmic potassium ions and delivers the ions to the membrane domain of KdpB through an intramembrane tunnel. This chain is Potassium-transporting ATPase potassium-binding subunit, found in Geotalea uraniireducens (strain Rf4) (Geobacter uraniireducens).